A 395-amino-acid chain; its full sequence is tRNA-specific 2-thiouridylase MnmA (395 aa).

ATP contacts are provided by residues 7 to 14 (GLSGGVDS) and methionine 33. An interaction with target base in tRNA region spans residues 95-97 (NPD). The Nucleophile role is filled by cysteine 100. Cysteine 100 and cysteine 200 are joined by a disulfide. Residue glycine 124 coordinates ATP. The interaction with tRNA stretch occupies residues 150-152 (KDQ). Catalysis depends on cysteine 200, which acts as the Cysteine persulfide intermediate. The interval 346–347 (RY) is interaction with tRNA.

The protein belongs to the MnmA/TRMU family.

Its subcellular location is the cytoplasm. It catalyses the reaction S-sulfanyl-L-cysteinyl-[protein] + uridine(34) in tRNA + AH2 + ATP = 2-thiouridine(34) in tRNA + L-cysteinyl-[protein] + A + AMP + diphosphate + H(+). In terms of biological role, catalyzes the 2-thiolation of uridine at the wobble position (U34) of tRNA, leading to the formation of s(2)U34. This is tRNA-specific 2-thiouridylase MnmA from Flavobacterium johnsoniae (strain ATCC 17061 / DSM 2064 / JCM 8514 / BCRC 14874 / CCUG 350202 / NBRC 14942 / NCIMB 11054 / UW101) (Cytophaga johnsonae).